Consider the following 554-residue polypeptide: MSPPIQLLSPEIVNLIAAGEVIDSLAAVVRELVENAIDAEATRLTISIVPELWQVTVADNGRGMSLENLRHCAKAHHTSKICDLDDLWKITSLGFRGEALFSITQVGQLTIKSRDATGYQVGWCVDYNQQGEIIKEQTSPMASGTIVTASNLFGTIPVRRQGLPTIKQQLKAIQGMIDNMSLCHPQITWQVYHNHQSWLTISPGKTPQQILPQLLKSVHFHDLQFLCETIITPSQEQAKLEMVLGLPDRTSRGRLDWLKIAVNGRVVRSPRLEQTILAGLSRTLPKGRFPVSFLHFKIPPSEIDWNRHPAKTEIYLQSLEFWQEKVTEIIEKALKLSPLTITTVGQNQRVKKLLKASENKGVYNVGTSHVNELDLIKLRAVGQVNKTYIVAEHSQGLWLVEQHIAHERVLYEQLQDQWQLIPVEQAIILTQLSTKQVEQLERIGIDIEPFGENTWAVRNVPKLLENREDCPDALIELSLGGDLETAQVAVACRSAIRNGVLLDLAQMQDLLDSWKKTRNPRTCPHGRPIYLSLEESSLSRFFRRHWVIGKSHGI.

This sequence belongs to the DNA mismatch repair MutL/HexB family.

Its function is as follows. This protein is involved in the repair of mismatches in DNA. It is required for dam-dependent methyl-directed DNA mismatch repair. May act as a 'molecular matchmaker', a protein that promotes the formation of a stable complex between two or more DNA-binding proteins in an ATP-dependent manner without itself being part of a final effector complex. This chain is DNA mismatch repair protein MutL, found in Crocosphaera subtropica (strain ATCC 51142 / BH68) (Cyanothece sp. (strain ATCC 51142)).